Reading from the N-terminus, the 54-residue chain is Large ribosomal subunit protein bL33 (54 aa).

This sequence belongs to the bacterial ribosomal protein bL33 family.

The protein is Large ribosomal subunit protein bL33 of Stenotrophomonas maltophilia (strain K279a).